Reading from the N-terminus, the 194-residue chain is CASP-like protein 2C1 (194 aa).

The Cytoplasmic segment spans residues 1–18; the sequence is MSSYMEAAAAARAAEAKT. A helical transmembrane segment spans residues 19–39; the sequence is EGLLRGACALLAAAAALLVGL. The Extracellular segment spans residues 40-59; it reads NTQTETVLFIRKKATVKDVQ. Residues 60–80 traverse the membrane as a helical segment; it reads ALWVLAMAAAAAAGYHLLQLL. Over 81–109 the chain is Cytoplasmic; it reads RCFYLSRFADGKPCRHRRAIAWLCFLLDK. Residues 110–130 traverse the membrane as a helical segment; sequence GCAYITFATTVAAAQACVVAL. Residues 131 to 151 lie on the Extracellular side of the membrane; that stretch reads YGTHALQWTKLCNIYTRFCEQ. The helical transmembrane segment at 152–172 threads the bilayer; that stretch reads VAGSLVCAMLAAVGTALLSVV. The Cytoplasmic segment spans residues 173–194; sequence SARNLFRLYPSMLSPPPSSFVG.

The protein belongs to the Casparian strip membrane proteins (CASP) family. Homodimer and heterodimers.

It localises to the cell membrane. This Oryza sativa subsp. japonica (Rice) protein is CASP-like protein 2C1.